The chain runs to 198 residues: Recombination protein RecR (198 aa).

Residues 57-72 (CEKCNTFTEAQICEVC) form a C4-type zinc finger. The Toprim domain maps to 80–175 (TLLCVVETPA…SVTRLARGVP (96 aa)).

It belongs to the RecR family.

Functionally, may play a role in DNA repair. It seems to be involved in an RecBC-independent recombinational process of DNA repair. It may act with RecF and RecO. This Paraburkholderia phymatum (strain DSM 17167 / CIP 108236 / LMG 21445 / STM815) (Burkholderia phymatum) protein is Recombination protein RecR.